Reading from the N-terminus, the 412-residue chain is D-xylonate dehydratase (412 aa).

As to quaternary structure, homooctamer.

It catalyses the reaction D-xylonate = 2-dehydro-3-deoxy-D-arabinonate + H2O. In terms of biological role, NADP-dependent D-xylose dehydrogenase involved in the degradation of D-xylose, a major component of hemicelluloses such as xylan. Catalyzes the third reaction in the xylose utilization pathway through dehydratation of D-xylonate into 2-dehydro-3-deoxy-D-xylonate. The sequence is that of D-xylonate dehydratase from Haloferax volcanii (strain ATCC 29605 / DSM 3757 / JCM 8879 / NBRC 14742 / NCIMB 2012 / VKM B-1768 / DS2) (Halobacterium volcanii).